Here is a 198-residue protein sequence, read N- to C-terminus: uncharacterized protein (198 aa).

This is an uncharacterized protein from Acheta domesticus (House cricket).